Here is a 778-residue protein sequence, read N- to C-terminus: MKMTVDFEECLKDSPRFRAALEEVEGDVAELELKLDKLVKLCIAMIDTGKAFCLANKQFMNGIRDLAQYSSNDAVVETSLTKFSDSLQEMINFHTILFDQTQRSIKAQLQNFVKEDLRKFKDAKKQFEKVSEEKENALAKNAQVQRNKQHEVEEATNILTATRKCFRHIALDYVLQINVLQSKRRSEILKSMLSFMYAHLAFFHQGYDLFSELGPYMKDLGAQLDRLVVDAAKEKREMEQKHSTIQQKDFSSDDSKLEYNVDAANGIVMEGYLFKRASNAFKTWNRRWFSIQNNQLVYQKKFKDNPTVVVEDLRLCTVKHCEDIERRFCFEVVSPTKSCMLQADSEKLRQAWIKAVQTSIATAYREKGDESEKLDKKSSPSTGSLDSGNESKEKLLKGESALQRVQCVPGNASCCDCGLADPRWASINLGITLCIECSGIHRSLGVHFSKVRSLTLDTWEPELLKLMCELGNDVINRVYEANVEKMGIKKPQPGQRQEKEAYIKAKYVERKFVDKYSVSSSPPEQEKKVVSKDSEEKRLSIPKLGPGDQVRTSIQSSVKSNDSGIQQSSDDGRESLPSTVSANSLYEPEGERQDSSVFLDSKHLNPGLQLYRASYEKNLPKMAEALAHGADVNWANSEENKATPLIQAVLGGSLVTCEFLLQNGANVNQRDVQGRGPLHHATVLGHTGQVCLFLKRGANQHATDEEGKDPLSIAVEAANADIVTLLRLARMNEEMRESEGLYGQPGDETYQDIFRDFSQMASNNPEKLNRFQQDSQKF.

In terms of domain architecture, BAR spans 1–226 (MKMTVDFEEC…MKDLGAQLDR (226 aa)). Residues 266–361 (GIVMEGYLFK…WIKAVQTSIA (96 aa)) form the PH domain. The interval 371–391 (SEKLDKKSSPSTGSLDSGNES) is disordered. Over residues 379–388 (SPSTGSLDSG) the composition is skewed to polar residues. Residues Ser-384 and Ser-387 each carry the phosphoserine modification. Residues 399-520 (ESALQRVQCV…KFVDKYSVSS (122 aa)) form the Arf-GAP domain. The C4-type zinc finger occupies 414–437 (CCDCGLADPRWASINLGITLCIEC). Residues 518-596 (VSSSPPEQEK…EPEGERQDSS (79 aa)) form a disordered region. The residue at position 521 (Ser-521) is a Phosphoserine. Basic and acidic residues predominate over residues 524–539 (EQEKKVVSKDSEEKRL). The span at 550–569 (VRTSIQSSVKSNDSGIQQSS) shows a compositional bias: polar residues. Residues Ser-581 and Ser-584 each carry the phosphoserine modification. 3 ANK repeats span residues 640–669 (NKAT…NVNQ), 673–702 (QGRG…NQHA), and 706–735 (EGKD…NEEM). Tyr-742 is modified (phosphotyrosine). Phosphoserine is present on Ser-775.

Interacts with RAB35 (GTP-bound form); the interaction is direct and probably recruits ACAP2 to membranes. Interacts with MICALL1; the interaction is indirect through RAB35.

It localises to the endosome membrane. The protein resides in the cell membrane. With respect to regulation, GAP activity stimulated by phosphatidylinositol 4,5-bisphosphate (PIP2) and phosphatidic acid. In terms of biological role, GTPase-activating protein (GAP) for ADP ribosylation factor 6 (ARF6). Doesn't show GAP activity for RAB35. In Oryctolagus cuniculus (Rabbit), this protein is Arf-GAP with coiled-coil, ANK repeat and PH domain-containing protein 2 (ACAP2).